A 421-amino-acid polypeptide reads, in one-letter code: UPF0415 protein C7orf25 homolog (421 aa).

This sequence belongs to the UPF0415 family.

The protein is UPF0415 protein C7orf25 homolog of Rattus norvegicus (Rat).